The following is a 185-amino-acid chain: Ribosome-recycling factor (185 aa).

The protein belongs to the RRF family.

It is found in the cytoplasm. In terms of biological role, responsible for the release of ribosomes from messenger RNA at the termination of protein biosynthesis. May increase the efficiency of translation by recycling ribosomes from one round of translation to another. The protein is Ribosome-recycling factor of Hamiltonella defensa subsp. Acyrthosiphon pisum (strain 5AT).